The primary structure comprises 206 residues: LexA repressor (206 aa).

Positions 28–48 (RAEIAKRLGFKSANAAEEHLK) form a DNA-binding region, H-T-H motif. Residues Ser-123 and Lys-160 each act as for autocatalytic cleavage activity in the active site.

It belongs to the peptidase S24 family. In terms of assembly, homodimer.

The catalysed reaction is Hydrolysis of Ala-|-Gly bond in repressor LexA.. Functionally, represses a number of genes involved in the response to DNA damage (SOS response), including recA and lexA. In the presence of single-stranded DNA, RecA interacts with LexA causing an autocatalytic cleavage which disrupts the DNA-binding part of LexA, leading to derepression of the SOS regulon and eventually DNA repair. This Shewanella sediminis (strain HAW-EB3) protein is LexA repressor.